Reading from the N-terminus, the 117-residue chain is Small ribosomal subunit protein uS13 (117 aa).

The interval 94–117 is disordered; sequence SLPLRGQRTKTNARTRKGPRRLIK.

The protein belongs to the universal ribosomal protein uS13 family. Part of the 30S ribosomal subunit. Forms a loose heterodimer with protein S19. Forms two bridges to the 50S subunit in the 70S ribosome.

In terms of biological role, located at the top of the head of the 30S subunit, it contacts several helices of the 16S rRNA. In the 70S ribosome it contacts the 23S rRNA (bridge B1a) and protein L5 of the 50S subunit (bridge B1b), connecting the 2 subunits; these bridges are implicated in subunit movement. Contacts the tRNAs in the A and P-sites. The polypeptide is Small ribosomal subunit protein uS13 (Vesicomyosocius okutanii subsp. Calyptogena okutanii (strain HA)).